The primary structure comprises 139 residues: D-ribose pyranase (139 aa).

Histidine 20 (proton donor) is an active-site residue. Residues aspartate 28, histidine 106, and 128–130 (YAN) contribute to the substrate site.

This sequence belongs to the RbsD / FucU family. RbsD subfamily. Homodecamer.

Its subcellular location is the cytoplasm. It carries out the reaction beta-D-ribopyranose = beta-D-ribofuranose. It participates in carbohydrate metabolism; D-ribose degradation; D-ribose 5-phosphate from beta-D-ribopyranose: step 1/2. Catalyzes the interconversion of beta-pyran and beta-furan forms of D-ribose. The polypeptide is D-ribose pyranase (Aliivibrio fischeri (strain MJ11) (Vibrio fischeri)).